We begin with the raw amino-acid sequence, 829 residues long: Trimethylamine-N-oxide reductase (829 aa).

The segment at residues 1–31 (MNRRDFLKGIASSSFVVLGGSSVLTPLNALA) is a signal peptide (tat-type signal). Residue Ser-180 coordinates Mo-bis(molybdopterin guanine dinucleotide).

This sequence belongs to the prokaryotic molybdopterin-containing oxidoreductase family. It depends on Mo-bis(molybdopterin guanine dinucleotide) as a cofactor. In terms of processing, predicted to be exported by the Tat system. The position of the signal peptide cleavage has been experimentally proven.

It localises to the periplasm. The enzyme catalyses trimethylamine + 2 Fe(III)-[cytochrome c] + H2O = trimethylamine N-oxide + 2 Fe(II)-[cytochrome c] + 3 H(+). Functionally, reduces trimethylamine-N-oxide (TMAO) into trimethylamine; an anaerobic reaction coupled to energy-yielding reactions. This Shewanella massilia protein is Trimethylamine-N-oxide reductase (torA).